Here is a 430-residue protein sequence, read N- to C-terminus: Adenylosuccinate synthetase (430 aa).

GTP contacts are provided by residues 13 to 19 (GDEGKGK) and 41 to 43 (GHT). D14 serves as the catalytic Proton acceptor. Positions 14 and 41 each coordinate Mg(2+). IMP-binding positions include 14–17 (DEGK), 39–42 (NAGH), T130, R144, Q225, T240, and R304. Residue H42 is the Proton donor of the active site. Residue 300–306 (ASTGRPR) participates in substrate binding. Residues R306, 332–334 (KLD), and 414–416 (STG) each bind GTP.

Belongs to the adenylosuccinate synthetase family. As to quaternary structure, homodimer. Mg(2+) is required as a cofactor.

It is found in the cytoplasm. The enzyme catalyses IMP + L-aspartate + GTP = N(6)-(1,2-dicarboxyethyl)-AMP + GDP + phosphate + 2 H(+). The protein operates within purine metabolism; AMP biosynthesis via de novo pathway; AMP from IMP: step 1/2. In terms of biological role, plays an important role in the de novo pathway of purine nucleotide biosynthesis. Catalyzes the first committed step in the biosynthesis of AMP from IMP. The sequence is that of Adenylosuccinate synthetase from Xylella fastidiosa (strain M12).